A 489-amino-acid polypeptide reads, in one-letter code: CBL-interacting serine/threonine-protein kinase 12 (489 aa).

One can recognise a Protein kinase domain in the interval 26–280; sequence YEMGKLLGHG…FPEIMENSWF (255 aa). Residues 32 to 40 and K55 contribute to the ATP site; that span reads LGHGTFAKV. D148 serves as the catalytic Proton acceptor. The activation loop stretch occupies residues 166-195; that stretch reads DFGLSAVSDQIRQDGLFHTFCGTPAYVAPE. S170 bears the Phosphoserine mark. T184 is modified (phosphothreonine). Residues 336-360 enclose the NAF domain; the sequence is PRPASLNAFDIISFSQGFDLSGLFD. Residues 363–392 form a PPI region; it reads GEGSRFVSGAPVSKIISKLEEIAKVVSFTV.

This sequence belongs to the protein kinase superfamily. CAMK Ser/Thr protein kinase family. SNF1 subfamily. Interacts with CBL2 and CBL3. Mn(2+) is required as a cofactor. Expressed in roots and shoots.

It carries out the reaction L-seryl-[protein] + ATP = O-phospho-L-seryl-[protein] + ADP + H(+). The enzyme catalyses L-threonyl-[protein] + ATP = O-phospho-L-threonyl-[protein] + ADP + H(+). In terms of biological role, CIPK serine-threonine protein kinases interact with CBL proteins. Binding of a CBL protein to the regulatory NAF domain of CIPK protein lead to the activation of the kinase in a calcium-dependent manner. The polypeptide is CBL-interacting serine/threonine-protein kinase 12 (CIPK12) (Arabidopsis thaliana (Mouse-ear cress)).